The following is a 311-amino-acid chain: DNA replication terminus site-binding protein (311 aa).

It belongs to the Tus family.

Its subcellular location is the cytoplasm. Functionally, trans-acting protein required for termination of DNA replication. Binds to DNA replication terminator sequences (terA to terF) to prevent the passage of replication forks. The termination efficiency will be affected by the affinity of this protein for the terminator sequence. The polypeptide is DNA replication terminus site-binding protein (Yersinia pseudotuberculosis serotype I (strain IP32953)).